A 332-amino-acid chain; its full sequence is Alpha/beta hydrolase domain-containing protein aho-3 (332 aa).

Residues 1–15 (MSSGAPSGSSMSSTP) are compositionally biased toward low complexity. The tract at residues 1 to 24 (MSSGAPSGSSMSSTPGSPPPRAGG) is disordered. Catalysis depends on charge relay system residues serine 191, aspartate 256, and histidine 285.

The protein belongs to the AB hydrolase superfamily. ABHD17 family. In terms of processing, palmitoylated on cysteine residues located in a cysteine cluster at the N-terminus which promotes membrane localization and localization to sensory neuron endings. As to expression, expressed in a subset of neurons including AIY, HSN, ADF, AFD, AWC, AWB and NSM, hypodermis, pharyngeal muscle and intestine.

Its subcellular location is the cell membrane. It localises to the cytoplasmic vesicle membrane. It catalyses the reaction S-hexadecanoyl-L-cysteinyl-[protein] + H2O = L-cysteinyl-[protein] + hexadecanoate + H(+). Its function is as follows. Hydrolyzes fatty acids from S-acylated cysteine residues in proteins. Acts in sensory neurons including AWC to regulate starvation-induced thermotaxis plasticity and salt learning behavior. This chain is Alpha/beta hydrolase domain-containing protein aho-3, found in Caenorhabditis elegans.